Reading from the N-terminus, the 317-residue chain is MKGLKNQIMKKTSLFICTLLFISSIVFHPKITFAYPFWAQQNYESPREATGKIVCANCHLAQMPTIAEVPQSVGADSVFKAVVKIPYKNDLKEIGADGSEVPLQVGAVVMLPDGFKLAPQERWTEEIKKETEGVYFTNYSEEKDNIIVVGPLPGDTNKEIVFPVLSPDPSTNKEYHYGKYSLHIGGNRGRGQVYPTGDKSNNVVFTSSSSGTINSIETIEDGSYKVNIEKENGEITTEAVPVGPQLIVKAQDKINAGDPLTNDPNVGGFGQLDAEVVLQSPYRVIGLIAFFIGVGLTQILLVLKKKQVEKVQAAEGI.

The signal sequence occupies residues 1–34 (MKGLKNQIMKKTSLFICTLLFISSIVFHPKITFA). Positions 35, 55, 58, and 59 each coordinate heme. A helical membrane pass occupies residues 284 to 304 (VIGLIAFFIGVGLTQILLVLK).

It belongs to the cytochrome f family. The 4 large subunits of the cytochrome b6-f complex are cytochrome b6, subunit IV (17 kDa polypeptide, PetD), cytochrome f and the Rieske protein, while the 4 small subunits are PetG, PetL, PetM and PetN. The complex functions as a dimer. Heme is required as a cofactor.

Its subcellular location is the cellular thylakoid membrane. Component of the cytochrome b6-f complex, which mediates electron transfer between photosystem II (PSII) and photosystem I (PSI), cyclic electron flow around PSI, and state transitions. The chain is Cytochrome f from Prochlorococcus marinus (strain MIT 9301).